A 376-amino-acid polypeptide reads, in one-letter code: Gibberellic acid methyltransferase 1 (376 aa).

Tyr-22, Cys-64, Asn-69, Asp-104, Leu-105, Ser-136, and Phe-137 together coordinate S-adenosyl-L-homocysteine. A gibberellin A9-binding site is contributed by Trp-158. 6 residues coordinate Mg(2+): Asn-175, Val-179, Arg-265, Asp-266, Phe-268, and Asn-269.

This sequence belongs to the methyltransferase superfamily. Type-7 methyltransferase family. SABATH subfamily. Requires Mg(2+) as cofactor. In terms of tissue distribution, expressed in siliques, developing seeds, anthers and germinating seeds. Not detected in leaves, stems, flowers and roots.

The enzyme catalyses gibberellin A9 + S-adenosyl-L-methionine = O-methyl gibberellin A9 + S-adenosyl-L-homocysteine. With respect to regulation, up-regulated by K(+) and NH(4+), down-regulated by Zn(2+), Cu(2+), Fe(2+) and Fe(3+). In terms of biological role, methylates the carboxyl group of several gibberellins (GAs). Substrate preference is GA9 &gt; GA20 &gt; GA3 &gt; GA4 &gt; GA34 &gt; GA51 &gt; GA1 &gt; GA19 &gt; GA12. No activity with diterpenes abietic acid and ent-kaurenoic acid. This is Gibberellic acid methyltransferase 1 (GAMT1) from Arabidopsis thaliana (Mouse-ear cress).